Reading from the N-terminus, the 88-residue chain is Small ribosomal subunit protein uS17 (88 aa).

Belongs to the universal ribosomal protein uS17 family. Part of the 30S ribosomal subunit.

One of the primary rRNA binding proteins, it binds specifically to the 5'-end of 16S ribosomal RNA. The protein is Small ribosomal subunit protein uS17 of Synechococcus sp. (strain WH7803).